The chain runs to 402 residues: Multidrug resistance protein MdtH (402 aa).

Residues 1-12 (MSRVSQARNLGK) lie on the Cytoplasmic side of the membrane. Residues 13–33 (YFLLIDNMLVVLGFFVVFPLI) traverse the membrane as a helical segment. Residues 34-98 (SIRFVDQMGW…GFATMGIAHE (65 aa)) are Periplasmic-facing. The chain crosses the membrane as a helical span at residues 99 to 116 (PWLLWFSCFLSGLGGTLF). Over 117 to 138 (DPPRSALVVKLIRPEQRGRFFS) the chain is Cytoplasmic. The helical transmembrane segment at 139 to 159 (LLMMQDSAGAVIGALLGSWLL) threads the bilayer. Over 160–164 (QYDFR) the chain is Periplasmic. A helical transmembrane segment spans residues 165–185 (LVCATGAILFILCALFNAWLL). Topologically, residues 186 to 213 (PAWKLSTARTPVREGMRRVMSNKRFVTY) are cytoplasmic. The chain crosses the membrane as a helical span at residues 214–234 (VLTLAGYYMLAVQVMLMLPIM). Over 235–243 (VNDIAGSPA) the chain is Periplasmic. A helical membrane pass occupies residues 244–264 (AVKWMYAIEACLSLTLLYPIA). The Cytoplasmic segment spans residues 265-276 (RWSEKRFRLEHR). The helical transmembrane segment at 277-297 (LMAGLLVMSLSMLPIGMVGNL) threads the bilayer. Residues 298–299 (QQ) are Periplasmic-facing. A helical transmembrane segment spans residues 300-320 (LFTLICAFYIGSVIAEPARET). Residues 321–339 (LSASPADARARGSYMGFSR) lie on the Cytoplasmic side of the membrane. A helical transmembrane segment spans residues 340–360 (LGLAIGGAISYIGGGWLFDMG). Topologically, residues 361–367 (KALAQPE) are periplasmic. The helical transmembrane segment at 368–388 (LPWMMLGIIGFITFLALGWQF) threads the bilayer. The Cytoplasmic portion of the chain corresponds to 389-402 (SHKRTPRRMLEPGA).

The protein belongs to the major facilitator superfamily. DHA1 family. MdtH (TC 2.A.1.2.21) subfamily.

It localises to the cell inner membrane. This Salmonella typhi protein is Multidrug resistance protein MdtH.